A 64-amino-acid polypeptide reads, in one-letter code: Large ribosomal subunit protein bL35 (64 aa).

The protein belongs to the bacterial ribosomal protein bL35 family.

This is Large ribosomal subunit protein bL35 from Alcanivorax borkumensis (strain ATCC 700651 / DSM 11573 / NCIMB 13689 / SK2).